The following is a 435-amino-acid chain: Adenylosuccinate synthetase (435 aa).

GTP is bound by residues Gly-12–Lys-18 and Gly-40–Thr-42. Asp-13 functions as the Proton acceptor in the catalytic mechanism. Positions 13 and 40 each coordinate Mg(2+). IMP contacts are provided by residues Asp-13–Lys-16, Asn-38–His-41, Thr-130, Arg-144, Gln-224, Thr-239, and Arg-301. Residue His-41 is the Proton donor of the active site. Thr-297–Arg-303 lines the substrate pocket. GTP-binding positions include Arg-303, Lys-329–Asp-331, and Ser-411–Gly-413.

It belongs to the adenylosuccinate synthetase family. Homodimer. It depends on Mg(2+) as a cofactor.

The protein resides in the cytoplasm. The catalysed reaction is IMP + L-aspartate + GTP = N(6)-(1,2-dicarboxyethyl)-AMP + GDP + phosphate + 2 H(+). It functions in the pathway purine metabolism; AMP biosynthesis via de novo pathway; AMP from IMP: step 1/2. Its function is as follows. Plays an important role in the de novo pathway of purine nucleotide biosynthesis. Catalyzes the first committed step in the biosynthesis of AMP from IMP. The chain is Adenylosuccinate synthetase from Wolbachia sp. subsp. Brugia malayi (strain TRS).